Reading from the N-terminus, the 491-residue chain is MNTQQLAKLRSIVPEMRRVRHIHFVGIGGAGMGGIAEVLANEGYQISGSDLAPNPVTQQLMNLGATIYFNHRPENVRDASVVVVSSAISADNPEIVAAHEARIPVIRRAEMLAELMRFRHGIAIAGTHGKTTTTAMVSSIYAEAGLDPTFVNGGLVKAAGVHARLGHGRYLIAEADESDASFLHLQPMVAIVTNIEADHMDTYQGDFENLKQTFINFLHNLPFYGRAVMCVDDPVIRELLPRVGRQTTTYGFSEDADVRVEDYQQIGPQGHFTLLRQDKEPMRVTLNAPGRHNALNAAAAVAVATEEGIDDEAILRALESFQGTGRRFDFLGEFPLEPVNGKSGTAMLVDDYGHHPTEVDATIKAARAGWPDKNLVMLFQPHRFTRTRDLYDDFANVLTQVDTLLMLEVYPAGEAPIPGADSRSLCRTIRGRGKIDPILVPDPAQVAEMLAPVLIGNDLILVQGAGNIGKIARSLAEIKLKPQTPEEEQHD.

126–132 is a binding site for ATP; that stretch reads GTHGKTT.

The protein belongs to the MurCDEF family.

The protein resides in the cytoplasm. The enzyme catalyses UDP-N-acetyl-alpha-D-muramate + L-alanine + ATP = UDP-N-acetyl-alpha-D-muramoyl-L-alanine + ADP + phosphate + H(+). The protein operates within cell wall biogenesis; peptidoglycan biosynthesis. Functionally, cell wall formation. The sequence is that of UDP-N-acetylmuramate--L-alanine ligase from Shigella sonnei (strain Ss046).